The sequence spans 77 residues: Probable [Fe-S]-dependent transcriptional repressor (77 aa).

Cys-54, Cys-59, Cys-62, and Cys-68 together coordinate iron-sulfur cluster.

Belongs to the FeoC family.

Functionally, may function as a transcriptional regulator that controls feoABC expression. The chain is Probable [Fe-S]-dependent transcriptional repressor from Proteus mirabilis (strain HI4320).